An 866-amino-acid polypeptide reads, in one-letter code: Ribosome biogenesis protein BOP1 homolog (866 aa).

Disordered stretches follow at residues 1 to 180 (MVAN…EETR) and 214 to 241 (PPEAKSRFKGGKNQDEYAAGDTSDEEDI). 3 stretches are compositionally biased toward acidic residues: residues 37–52 (VDDESASDYYESDEEN), 60–146 (GNDE…LEEP), and 167–179 (TAEDEDEEDDEET). 6 WD repeats span residues 527–566 (GHTDMIRSVSIEPKGEYLVTGSDDQTVKIWEVSTARCIRT), 568–608 (PTGD…SLLV), 697–735 (KSKGLIQCVLFHPVKPCLFVATQRHVRVYDLVKQELLKK), 738–777 (PSCKWISSMAIHPKGDNLLVATYEKKMMWFDLDLSTRPYQ), 781–820 (LHHSAIRNVAFHLRYPLFASASDDRSVIVSHGMVYNDLLQ), and 836–866 (VNDFGAFDVVFHPTQPWLFSSGADNTVRLYT).

This sequence belongs to the WD repeat BOP1/ERB1 family.

It localises to the nucleus. The protein resides in the nucleolus. Its subcellular location is the nucleoplasm. Functionally, required for maturation of ribosomal RNAs and formation of the large ribosomal subunit. This chain is Ribosome biogenesis protein BOP1 homolog, found in Aedes aegypti (Yellowfever mosquito).